The sequence spans 229 residues: Orotate phosphoribosyltransferase (229 aa).

Residues arginine 107, lysine 108, lysine 111, histidine 113, and 133-141 (EDLTTAGGS) each bind 5-phospho-alpha-D-ribose 1-diphosphate. Threonine 137 serves as a coordination point for orotate.

This sequence belongs to the purine/pyrimidine phosphoribosyltransferase family. PyrE subfamily. In terms of assembly, homodimer. The cofactor is Mg(2+).

It catalyses the reaction orotidine 5'-phosphate + diphosphate = orotate + 5-phospho-alpha-D-ribose 1-diphosphate. It participates in pyrimidine metabolism; UMP biosynthesis via de novo pathway; UMP from orotate: step 1/2. Its function is as follows. Catalyzes the transfer of a ribosyl phosphate group from 5-phosphoribose 1-diphosphate to orotate, leading to the formation of orotidine monophosphate (OMP). The sequence is that of Orotate phosphoribosyltransferase from Rhizobium etli (strain ATCC 51251 / DSM 11541 / JCM 21823 / NBRC 15573 / CFN 42).